A 274-amino-acid polypeptide reads, in one-letter code: Leucyl/phenylalanyl-tRNA--protein transferase (274 aa).

Belongs to the L/F-transferase family.

Its subcellular location is the cytoplasm. It catalyses the reaction N-terminal L-lysyl-[protein] + L-leucyl-tRNA(Leu) = N-terminal L-leucyl-L-lysyl-[protein] + tRNA(Leu) + H(+). The enzyme catalyses N-terminal L-arginyl-[protein] + L-leucyl-tRNA(Leu) = N-terminal L-leucyl-L-arginyl-[protein] + tRNA(Leu) + H(+). It carries out the reaction L-phenylalanyl-tRNA(Phe) + an N-terminal L-alpha-aminoacyl-[protein] = an N-terminal L-phenylalanyl-L-alpha-aminoacyl-[protein] + tRNA(Phe). Its function is as follows. Functions in the N-end rule pathway of protein degradation where it conjugates Leu, Phe and, less efficiently, Met from aminoacyl-tRNAs to the N-termini of proteins containing an N-terminal arginine or lysine. The polypeptide is Leucyl/phenylalanyl-tRNA--protein transferase (Psychrobacter cryohalolentis (strain ATCC BAA-1226 / DSM 17306 / VKM B-2378 / K5)).